A 438-amino-acid polypeptide reads, in one-letter code: Aspartate--tRNA(Asp/Asn) ligase (438 aa).

An L-aspartate-binding site is contributed by glutamate 176. The interval 198–201 (QLYK) is aspartate. Residue arginine 220 coordinates L-aspartate. Residues 220–222 (RAE), 228–230 (RHL), and glutamate 361 each bind ATP. Glutamate 361 and serine 364 together coordinate Mg(2+). Positions 364 and 368 each coordinate L-aspartate. 409 to 412 (GADR) is a binding site for ATP.

The protein belongs to the class-II aminoacyl-tRNA synthetase family. Type 2 subfamily. As to quaternary structure, homodimer. Requires Mg(2+) as cofactor.

Its subcellular location is the cytoplasm. The catalysed reaction is tRNA(Asx) + L-aspartate + ATP = L-aspartyl-tRNA(Asx) + AMP + diphosphate. Aspartyl-tRNA synthetase with relaxed tRNA specificity since it is able to aspartylate not only its cognate tRNA(Asp) but also tRNA(Asn). Reaction proceeds in two steps: L-aspartate is first activated by ATP to form Asp-AMP and then transferred to the acceptor end of tRNA(Asp/Asn). The polypeptide is Aspartate--tRNA(Asp/Asn) ligase (Methanococcus vannielii (strain ATCC 35089 / DSM 1224 / JCM 13029 / OCM 148 / SB)).